A 626-amino-acid chain; its full sequence is Acetolactate synthase large subunit (626 aa).

A compositionally biased stretch (polar residues) spans 1–13; the sequence is MNVAASQQPTPAT. The segment at 1-23 is disordered; it reads MNVAASQQPTPATVASRGRSAAP. Residue Glu73 participates in thiamine diphosphate binding. Residues Arg175, 281–302, and 324–343 each bind FAD; these read HGTVSAVGALQRSDLLIAIGSR and DIDPAEIGKIKQVEVPIVGD. The tract at residues 416 to 496 is thiamine pyrophosphate binding; that stretch reads QHQMWAAQFV…IKIALINNGN (81 aa). Residues Asp467 and Asn494 each coordinate Mg(2+).

Belongs to the TPP enzyme family. Dimer of large and small chains. Mg(2+) is required as a cofactor. Requires thiamine diphosphate as cofactor.

The enzyme catalyses 2 pyruvate + H(+) = (2S)-2-acetolactate + CO2. It participates in amino-acid biosynthesis; L-isoleucine biosynthesis; L-isoleucine from 2-oxobutanoate: step 1/4. It functions in the pathway amino-acid biosynthesis; L-valine biosynthesis; L-valine from pyruvate: step 1/4. The protein is Acetolactate synthase large subunit (ilvB) of Corynebacterium glutamicum (strain ATCC 13032 / DSM 20300 / JCM 1318 / BCRC 11384 / CCUG 27702 / LMG 3730 / NBRC 12168 / NCIMB 10025 / NRRL B-2784 / 534).